The sequence spans 497 residues: Probable cytosol aminopeptidase (497 aa).

Mn(2+) contacts are provided by lysine 265 and aspartate 270. Lysine 277 is a catalytic residue. Residues aspartate 288, aspartate 347, and glutamate 349 each contribute to the Mn(2+) site. Arginine 351 is an active-site residue.

The protein belongs to the peptidase M17 family. Mn(2+) is required as a cofactor.

Its subcellular location is the cytoplasm. It carries out the reaction Release of an N-terminal amino acid, Xaa-|-Yaa-, in which Xaa is preferably Leu, but may be other amino acids including Pro although not Arg or Lys, and Yaa may be Pro. Amino acid amides and methyl esters are also readily hydrolyzed, but rates on arylamides are exceedingly low.. The enzyme catalyses Release of an N-terminal amino acid, preferentially leucine, but not glutamic or aspartic acids.. Presumably involved in the processing and regular turnover of intracellular proteins. Catalyzes the removal of unsubstituted N-terminal amino acids from various peptides. This is Probable cytosol aminopeptidase from Geobacillus thermodenitrificans (strain NG80-2).